The following is a 417-amino-acid chain: Hydroxysteroid dehydrogenase-like protein 2 (417 aa).

NADP(+)-binding positions include G17–G23, K42, and D74. Y168 functions as the Proton acceptor in the catalytic mechanism. Position 172 (K172) interacts with NADP(+). The SCP2 domain occupies A306–N414.

This sequence belongs to the short-chain dehydrogenases/reductases (SDR) family.

Its subcellular location is the peroxisome. It is found in the mitochondrion. Has apparently no steroid dehydrogenase activity. Might act as a metabolic regulator that affects systemic adaptation to nutritional cues. The protein is Hydroxysteroid dehydrogenase-like protein 2 (hsdl2) of Xenopus laevis (African clawed frog).